The sequence spans 329 residues: o-succinylbenzoate synthase (329 aa).

Residue Lys140 is the Proton donor of the active site. Residues Asp168, Glu197, and Asp220 each coordinate Mg(2+). Lys242 serves as the catalytic Proton acceptor.

It belongs to the mandelate racemase/muconate lactonizing enzyme family. MenC type 1 subfamily. A divalent metal cation serves as cofactor.

The enzyme catalyses (1R,6R)-6-hydroxy-2-succinyl-cyclohexa-2,4-diene-1-carboxylate = 2-succinylbenzoate + H2O. The protein operates within quinol/quinone metabolism; 1,4-dihydroxy-2-naphthoate biosynthesis; 1,4-dihydroxy-2-naphthoate from chorismate: step 4/7. It functions in the pathway quinol/quinone metabolism; menaquinone biosynthesis. In terms of biological role, converts 2-succinyl-6-hydroxy-2,4-cyclohexadiene-1-carboxylate (SHCHC) to 2-succinylbenzoate (OSB). This Haemophilus influenzae (strain ATCC 51907 / DSM 11121 / KW20 / Rd) protein is o-succinylbenzoate synthase.